A 352-amino-acid chain; its full sequence is Phosphoribosylformylglycinamidine cyclo-ligase (352 aa).

It belongs to the AIR synthase family.

It is found in the cytoplasm. The catalysed reaction is 2-formamido-N(1)-(5-O-phospho-beta-D-ribosyl)acetamidine + ATP = 5-amino-1-(5-phospho-beta-D-ribosyl)imidazole + ADP + phosphate + H(+). It participates in purine metabolism; IMP biosynthesis via de novo pathway; 5-amino-1-(5-phospho-D-ribosyl)imidazole from N(2)-formyl-N(1)-(5-phospho-D-ribosyl)glycinamide: step 2/2. The protein is Phosphoribosylformylglycinamidine cyclo-ligase of Azoarcus sp. (strain BH72).